The chain runs to 149 residues: Large-conductance mechanosensitive channel (149 aa).

Transmembrane regions (helical) follow at residues 8–28 and 74–94; these read FIMR…SAFT and IGSV…LFLI.

The protein belongs to the MscL family. In terms of assembly, homopentamer.

It is found in the cell membrane. In terms of biological role, channel that opens in response to stretch forces in the membrane lipid bilayer. May participate in the regulation of osmotic pressure changes within the cell. In Enterococcus faecalis (strain ATCC 700802 / V583), this protein is Large-conductance mechanosensitive channel.